A 1337-amino-acid chain; its full sequence is DNA mismatch repair protein Msh6 (1337 aa).

Residues 68–130 form the PWWP domain; the sequence is PGDLVWAKME…IKYLRPYKGS (63 aa). Residues 170-310 are disordered; sequence AVCSEPSDTE…SEAPKRAAPV (141 aa). Residues 176 to 187 are compositionally biased toward acidic residues; that stretch reads SDTEEAEEEEME. Over residues 226 to 248 the composition is skewed to basic and acidic residues; that stretch reads VLDSDSDRDGSDVEFKPDVKEAS. Over residues 257–272 the composition is skewed to acidic residues; sequence DENEATDVETDEESIE. Residues 279 to 292 show a composition bias toward basic residues; that stretch reads PSKRKRGNVSKPSK. Residues 294–305 are compositionally biased toward basic and acidic residues; it reads SSLENEHSEAPK. Residue 1111–1118 coordinates ATP; it reads GPNMGGKS.

It belongs to the DNA mismatch repair MutS family.

Its subcellular location is the nucleus. Component of the post-replicative DNA mismatch repair system (MMR). Involved in B cell growth by positively regulating B cell proliferation and controlling replication efficiency. Controls cell cycle to prevent re-replication and defects in DNA damage-induced G2 checkpoint. Doesn't seem to counteract or control the immunoglobulin gene conversion (Ig GC) and to contribute to guanine/uracil mismatch repair. This is DNA mismatch repair protein Msh6 from Gallus gallus (Chicken).